Reading from the N-terminus, the 184-residue chain is Large ribosomal subunit protein uL22 (184 aa).

Belongs to the universal ribosomal protein uL22 family.

This is Large ribosomal subunit protein uL22 (RPL17) from Yarrowia lipolytica (strain CLIB 122 / E 150) (Yeast).